The sequence spans 98 residues: NADH-ubiquinone oxidoreductase chain 4L (98 aa).

Helical transmembrane passes span 1–21 (MTPT…GMLI), 29–49 (SLLC…LIAL), and 61–81 (IILL…LVSI).

This sequence belongs to the complex I subunit 4L family. As to quaternary structure, core subunit of respiratory chain NADH dehydrogenase (Complex I) which is composed of 45 different subunits.

It is found in the mitochondrion inner membrane. It carries out the reaction a ubiquinone + NADH + 5 H(+)(in) = a ubiquinol + NAD(+) + 4 H(+)(out). In terms of biological role, core subunit of the mitochondrial membrane respiratory chain NADH dehydrogenase (Complex I) which catalyzes electron transfer from NADH through the respiratory chain, using ubiquinone as an electron acceptor. Part of the enzyme membrane arm which is embedded in the lipid bilayer and involved in proton translocation. This is NADH-ubiquinone oxidoreductase chain 4L (MT-ND4L) from Macaca maura (Moor macaque).